Here is a 139-residue protein sequence, read N- to C-terminus: Protein AC53 (139 aa).

It is found in the host cytoplasm. The protein resides in the host nucleus. Plays a role in nucleocapsid assembly. This is Protein AC53 (AC53) from Lepidoptera (butterflies and moths).